The primary structure comprises 779 residues: Cysteine-rich protein 2-binding protein (779 aa).

A disordered region spans residues 1 to 34 (MDSSIHLSGLLSRHDDDATRTSTSEGLEEGEVEG). Position 4 is a phosphoserine (serine 4). N6-acetyllysine is present on lysine 230. 3 disordered regions span residues 247–292 (SRNP…PVKF), 314–345 (LSSS…HSAT), and 360–457 (PPQA…GPRY). Over residues 255–275 (MELKEKRSRTQEAKDIRRAQK) the composition is skewed to basic and acidic residues. At serine 284 the chain carries Phosphoserine. Lysine 291 is modified (N6-acetyllysine). Residues 314-334 (LSSSDRTPLTSPSPSPSLDFS) show a composition bias toward low complexity. Basic and acidic residues-rich tracts occupy residues 402-423 (RAPE…RMDG) and 443-452 (KPPLEKDMKP). Serine 413 is subject to Phosphoserine. The N-acetyltransferase domain occupies 635-779 (LDYCYVRPNH…KHAFFLRLRR (145 aa)).

As to quaternary structure, interacts with the LIM 1 domain of CSRP2. Component of the ADA2A-containing complex (ATAC), composed of CSRP2BP, KAT2A, TADA2L, TADA3L, ZZ3, MBIP, WDR5, YEATS2, CCDC101 and DR1. In the complex, it probably interacts directly with KAT2A, MBIP and WDR5.

Its subcellular location is the nucleus. It localises to the cytoplasm. In terms of biological role, component of the ATAC complex, a complex with histone acetyltransferase activity on histones H3 and H4. May function as a scaffold for the ATAC complex to promote ATAC complex stability. Has also weak histone acetyltransferase activity toward histone H4. Required for the normal progression through G1 and G2/M phases of the cell cycle. This is Cysteine-rich protein 2-binding protein from Mus musculus (Mouse).